The following is a 425-amino-acid chain: Stabilizer of axonemal microtubules 4 (425 aa).

2 disordered regions span residues 259–297 (RGSDRDTGYSRVSERSLNPRMPTPSSQPTSMSHRSYQPP) and 315–335 (NKEPTGFTLNNPSYVRSSYEQ). Basic and acidic residues predominate over residues 260 to 272 (GSDRDTGYSRVSE). Residues 277–290 (PRMPTPSSQPTSMS) show a composition bias toward low complexity. The segment covering 321–332 (FTLNNPSYVRSS) has biased composition (polar residues).

As to quaternary structure, microtubule inner protein component of sperm flagellar doublet microtubules. Interacts with PPP1CA. In terms of tissue distribution, expressed in brain, ovaries and testis. Expressed in the tracheal epithelium and in secondary spermatocytes and spermatids present in the seminiferous tubule. Expressed in ependymal cells lining the ventricular walls of the brain.

It localises to the cell projection. It is found in the cilium. The protein resides in the cytoplasm. The protein localises to the cytoskeleton. Its subcellular location is the flagellum axoneme. This Rattus norvegicus (Rat) protein is Stabilizer of axonemal microtubules 4.